The following is a 308-amino-acid chain: Aspartate carbamoyltransferase catalytic subunit (308 aa).

Carbamoyl phosphate contacts are provided by Arg-58 and Thr-59. Position 86 (Lys-86) interacts with L-aspartate. Positions 108, 136, and 139 each coordinate carbamoyl phosphate. Residues Arg-169 and Arg-222 each contribute to the L-aspartate site. The carbamoyl phosphate site is built by Gly-264 and Pro-265.

Belongs to the aspartate/ornithine carbamoyltransferase superfamily. ATCase family. As to quaternary structure, heterododecamer (2C3:3R2) of six catalytic PyrB chains organized as two trimers (C3), and six regulatory PyrI chains organized as three dimers (R2).

The catalysed reaction is carbamoyl phosphate + L-aspartate = N-carbamoyl-L-aspartate + phosphate + H(+). It participates in pyrimidine metabolism; UMP biosynthesis via de novo pathway; (S)-dihydroorotate from bicarbonate: step 2/3. In terms of biological role, catalyzes the condensation of carbamoyl phosphate and aspartate to form carbamoyl aspartate and inorganic phosphate, the committed step in the de novo pyrimidine nucleotide biosynthesis pathway. In Campylobacter hominis (strain ATCC BAA-381 / DSM 21671 / CCUG 45161 / LMG 19568 / NCTC 13146 / CH001A), this protein is Aspartate carbamoyltransferase catalytic subunit.